A 271-amino-acid chain; its full sequence is Phosphonates import ATP-binding protein PhnC 2 (271 aa).

The 244-residue stretch at 2-245 (LTIDKLTKRF…VARDIYGAGA (244 aa)) folds into the ABC transporter domain. Residue 34-41 (GRSGAGKS) coordinates ATP.

Belongs to the ABC transporter superfamily. Phosphonates importer (TC 3.A.1.9.1) family. The complex is composed of two ATP-binding proteins (PhnC), two transmembrane proteins (PhnE) and a solute-binding protein (PhnD).

It localises to the cell inner membrane. It carries out the reaction phosphonate(out) + ATP + H2O = phosphonate(in) + ADP + phosphate + H(+). In terms of biological role, part of the ABC transporter complex PhnCDE involved in phosphonates import. Responsible for energy coupling to the transport system. The sequence is that of Phosphonates import ATP-binding protein PhnC 2 from Roseobacter denitrificans (strain ATCC 33942 / OCh 114) (Erythrobacter sp. (strain OCh 114)).